The primary structure comprises 78 residues: Cell division topological specificity factor (78 aa).

The protein belongs to the MinE family.

Its function is as follows. Prevents the cell division inhibition by proteins MinC and MinD at internal division sites while permitting inhibition at polar sites. This ensures cell division at the proper site by restricting the formation of a division septum at the midpoint of the long axis of the cell. This Helicobacter hepaticus (strain ATCC 51449 / 3B1) protein is Cell division topological specificity factor.